The chain runs to 955 residues: Calsyntenin-2 (955 aa).

A signal peptide spans 1–20; the sequence is MLPGRLCWVPLLLALGVGSG. Residues 21-831 lie on the Extracellular side of the membrane; the sequence is SGGGGDSRQR…SIQHSSVVPS (811 aa). Cadherin domains are found at residues 44–160 and 161–280; these read IETS…APTF and KEPA…MPLF. Asn56 and Asn98 each carry an N-linked (GlcNAc...) asparagine glycan. Asn342, Asn374, Asn716, and Asn729 each carry an N-linked (GlcNAc...) asparagine glycan. A helical membrane pass occupies residues 832-852; it reads IATVVIIISVCMLVFVVAMGV. Residues 853-955 lie on the Cytoplasmic side of the membrane; sequence YRVRIAHQHF…LEWDDSTLPY (103 aa). Residues 887-955 are disordered; it reads PMEKHEGPGH…LEWDDSTLPY (69 aa). A compositionally biased stretch (basic and acidic residues) spans 888–898; the sequence is MEKHEGPGHGE. Composition is skewed to acidic residues over residues 899 to 913 and 920 to 929; these read DETE…EEEM and DDSEEEEEEE.

Belongs to the calsyntenin family. Proteolytically processed under normal cellular conditions. A primary zeta-cleavage generates a large extracellular (soluble) N-terminal domain (sAlc) and a short C-terminal transmembrane fragment (CTF1). A secondary cleavage catalyzed by gamma-secretase within the transmembrane domain releases the beta-Alc-gamma chain in the extracellular milieu and produces an intracellular fragment (AlcICD). This processing is strongly suppressed in the tripartite complex formed with APBA2 and APP, which seems to prevent the association with PSEN1. In terms of tissue distribution, restricted to the brain.

It localises to the postsynaptic cell membrane. Its subcellular location is the endoplasmic reticulum membrane. It is found in the golgi apparatus membrane. The protein resides in the cell projection. The protein localises to the dendrite. In terms of biological role, postsynaptic adhesion molecule that binds to presynaptic neurexins to mediate synapse formation, and which is involved in learning and memory. Promotes synapse development by acting as a cell adhesion molecule at the postsynaptic membrane, which associates with neurexin-alpha at the presynaptic membrane. The polypeptide is Calsyntenin-2 (Homo sapiens (Human)).